The chain runs to 376 residues: Chaperone protein DnaJ (376 aa).

Residues 5 to 70 (DYYEILGVSK…QKRAAYDQYG (66 aa)) form the J domain. The CR-type zinc-finger motif lies at 131-209 (GVTKEIRIPT…CHGHGRVERS (79 aa)). Zn(2+)-binding residues include C144, C147, C161, C164, C183, C186, C197, and C200. 4 CXXCXGXG motif repeats span residues 144 to 151 (CDVCHGSG), 161 to 168 (CPTCHGSG), 183 to 190 (CPHCQGRG), and 197 to 204 (CNKCHGHG).

Belongs to the DnaJ family. As to quaternary structure, homodimer. Zn(2+) serves as cofactor.

It is found in the cytoplasm. Participates actively in the response to hyperosmotic and heat shock by preventing the aggregation of stress-denatured proteins and by disaggregating proteins, also in an autonomous, DnaK-independent fashion. Unfolded proteins bind initially to DnaJ; upon interaction with the DnaJ-bound protein, DnaK hydrolyzes its bound ATP, resulting in the formation of a stable complex. GrpE releases ADP from DnaK; ATP binding to DnaK triggers the release of the substrate protein, thus completing the reaction cycle. Several rounds of ATP-dependent interactions between DnaJ, DnaK and GrpE are required for fully efficient folding. Also involved, together with DnaK and GrpE, in the DNA replication of plasmids through activation of initiation proteins. In Escherichia coli (strain K12 / MC4100 / BW2952), this protein is Chaperone protein DnaJ.